Reading from the N-terminus, the 569-residue chain is Paxillin-B (569 aa).

The short motif at 10 to 18 (DLDLLLADL) is the LD motif 1 element. Positions 62 to 78 (QPQTVQTISTPAPKNHN) are enriched in polar residues. A disordered region spans residues 62–103 (QPQTVQTISTPAPKNHNTTTTTASFSVSSQPAPQPPQQSQQI). Residues 79 to 102 (TTTTTASFSVSSQPAPQPPQQSQQ) show a composition bias toward low complexity. Residues 106–112 (LDDLDEL) carry the LD motif 2 motif. The interval 129-311 (TTPEEHITHA…SPKVVHGDDL (183 aa)) is disordered. A compositionally biased stretch (low complexity) spans 150–161 (NTSSTNSASSLS). Composition is skewed to polar residues over residues 162-188 (RPNNNPSVVSTPQPGKVTSTATITTKK) and 196-206 (TLETTSGNNVY). Residues 207–217 (SSQPSQSQPQP) are compositionally biased toward low complexity. The LD motif 3 signature appears at 232–239 (LDELLKGL). Over residues 258-272 (HQHHHQHQHHHHHNP) the composition is skewed to basic residues. Residues 273 to 301 (NHNQTQTVTTQINIGRTNTPNNNNNNNTN) are compositionally biased toward low complexity. Residues 311–318 (LDNLLNNL) carry the LD motif 4 motif. 4 LIM zinc-binding domains span residues 334-391 (GTCG…QELF), 393-452 (ARCA…TFAV), 453-510 (RCGG…QQAG), and 511-569 (SVCS…KLFA).

The protein belongs to the paxillin family. As to expression, expressed in the upper and lower cup of the fruiting body.

Its subcellular location is the cytoplasm. It is found in the cell cortex. It localises to the cell projection. The protein resides in the filopodium. The protein localises to the cell junction. Its subcellular location is the focal adhesion. It is found in the cytoskeleton. In terms of biological role, required for cell-substrate adhesion, cell sorting, slug migration, and cell differentiation. May function upstream of limB. The sequence is that of Paxillin-B (paxB) from Dictyostelium discoideum (Social amoeba).